A 146-amino-acid chain; its full sequence is MKLSNLSPKAGSKKRRRRVGRGIAAGQGASCGFGMRGQKSRSGTGTKAGFEGGQMPLYRRVPKLKHFTIVNPKNFTIVNVGQLTDLPANTEVTLESLMAAGIVTTNDGPLKVLGDGELSVALKVTAAAFSNGAKAKIEAAGGSCEA.

The segment at 1 to 52 (MKLSNLSPKAGSKKRRRRVGRGIAAGQGASCGFGMRGQKSRSGTGTKAGFEG) is disordered. Positions 11-20 (GSKKRRRRVG) are enriched in basic residues. A compositionally biased stretch (gly residues) spans 23–35 (IAAGQGASCGFGM).

The protein belongs to the universal ribosomal protein uL15 family. In terms of assembly, part of the 50S ribosomal subunit.

Functionally, binds to the 23S rRNA. The protein is Large ribosomal subunit protein uL15 of Picosynechococcus sp. (strain ATCC 27264 / PCC 7002 / PR-6) (Agmenellum quadruplicatum).